The following is a 131-amino-acid chain: Arsenate reductase (131 aa).

Residues cysteine 10, cysteine 82, and cysteine 89 each act as nucleophile in the active site. 2 disulfide bridges follow: cysteine 10–cysteine 82 and cysteine 82–cysteine 89.

The protein belongs to the low molecular weight phosphotyrosine protein phosphatase family. Thioredoxin-coupled ArsC subfamily.

Its subcellular location is the cytoplasm. The catalysed reaction is arsenate + [thioredoxin]-dithiol + H(+) = arsenite + [thioredoxin]-disulfide + H2O. Its function is as follows. Catalyzes the reduction of arsenate [As(V)] to arsenite [As(III)]. The sequence is that of Arsenate reductase from Staphylococcus aureus (strain COL).